A 446-amino-acid chain; its full sequence is Ribosomal protein uS12 methylthiotransferase RimO (446 aa).

One can recognise an MTTase N-terminal domain in the interval 4–119 (YKVGMVSLGC…IDKVIKEFIE (116 aa)). [4Fe-4S] cluster-binding residues include cysteine 13, cysteine 48, cysteine 82, cysteine 157, cysteine 161, and cysteine 164. The 231-residue stretch at 143 to 373 (TTQKESAYIR…MLSQEKISND (231 aa)) folds into the Radical SAM core domain. In terms of domain architecture, TRAM spans 376-442 (KLKVNKKYDI…DYDLIGVVED (67 aa)).

The protein belongs to the methylthiotransferase family. RimO subfamily. [4Fe-4S] cluster is required as a cofactor.

The protein resides in the cytoplasm. It carries out the reaction L-aspartate(89)-[ribosomal protein uS12]-hydrogen + (sulfur carrier)-SH + AH2 + 2 S-adenosyl-L-methionine = 3-methylsulfanyl-L-aspartate(89)-[ribosomal protein uS12]-hydrogen + (sulfur carrier)-H + 5'-deoxyadenosine + L-methionine + A + S-adenosyl-L-homocysteine + 2 H(+). Functionally, catalyzes the methylthiolation of an aspartic acid residue of ribosomal protein uS12. This Clostridium botulinum (strain Eklund 17B / Type B) protein is Ribosomal protein uS12 methylthiotransferase RimO.